A 221-amino-acid chain; its full sequence is DNA repair and recombination protein RadB (221 aa).

The protein belongs to the eukaryotic RecA-like protein family. RadB subfamily.

Involved in DNA repair and in homologous recombination. May regulate the cleavage reactions of the branch-structured DNA. Has a very weak ATPase activity that is not stimulated by DNA. Binds DNA but does not promote DNA strands exchange. In Thermococcus gammatolerans (strain DSM 15229 / JCM 11827 / EJ3), this protein is DNA repair and recombination protein RadB.